A 639-amino-acid chain; its full sequence is ATP-dependent rRNA helicase spb4 (639 aa).

Residues 14-42 (WEAVSPSLSEWVLDAVASWGFSKMTPVQA) carry the Q motif motif. In terms of domain architecture, Helicase ATP-binding spans 45–249 (IPLFMAHKDV…RVGLRNPVKV (205 aa)). ATP is bound at residue 58–65 (AVTGSGKT). The short motif at 197–200 (DEAD) is the DEAD box element. Positions 283 to 437 (TLRPILTSLQ…PISISDSDAS (155 aa)) constitute a Helicase C-terminal domain. Positions 521–624 (AYKDKQREKR…LRRAEKAAGK (104 aa)) form a coiled coil. The tract at residues 536-639 (QESAEAGAQQ…GDDDEFEGFD (104 aa)) is disordered. Over residues 575-622 (KHLQQEKRRWEKMTEEEKQKARETQKMLEEIRQKNEEARALRRAEKAA) the composition is skewed to basic and acidic residues. A compositionally biased stretch (acidic residues) spans 628–639 (NDGDDDEFEGFD).

This sequence belongs to the DEAD box helicase family. DDX55/SPB4 subfamily. In terms of assembly, component of pre-60S ribosomal complexes.

It localises to the nucleus. Its subcellular location is the nucleolus. The enzyme catalyses ATP + H2O = ADP + phosphate + H(+). In terms of biological role, ATP-binding RNA helicase involved in the biogenesis of 60S ribosomal subunits. Binds 90S pre-ribosomal particles and dissociates from pre-60S ribosomal particles after processing of 27SB pre-rRNA. Required for the normal formation of 18S rRNA through the processing of pre-rRNAs at sites A0, A1 and A2, and the normal formation of 25S and 5.8S rRNAs through the processing of pre-rRNAs at sites C1 and C2. This is ATP-dependent rRNA helicase spb4 from Aspergillus terreus (strain NIH 2624 / FGSC A1156).